Consider the following 148-residue polypeptide: Small ribosomal subunit protein eS6 (148 aa).

The protein belongs to the eukaryotic ribosomal protein eS6 family.

The sequence is that of Small ribosomal subunit protein eS6 from Pyrobaculum arsenaticum (strain DSM 13514 / JCM 11321 / PZ6).